The following is a 522-amino-acid chain: Calcium-dependent protein kinase 4 (522 aa).

Over residues 1–10 (MGACFSSHTA) the composition is skewed to polar residues. The segment at 1 to 43 (MGACFSSHTATAAADGGSGKRQQRKGDHKGKLPDGGGGEKEKE) is disordered. A lipid anchor (N-myristoyl glycine) is attached at Gly2. Positions 29 to 43 (KGKLPDGGGGEKEKE) are enriched in basic and acidic residues. One can recognise a Protein kinase domain in the interval 59–319 (YQVGRLLGHG…AAQALSHPWV (261 aa)). ATP-binding positions include 65–73 (LGHGQFGYT) and Lys88. Asp185 serves as the catalytic Proton acceptor. Positions 325–355 (ASEIPVDISVLSNMRQFVKYSRFKQFALRAL) are autoinhibitory domain. 4 consecutive EF-hand domains span residues 362-397 (EELA…DLPW), 399-434 (LKGP…IHQM), 441-476 (RWGL…GLKG), and 481-508 (LLEE…ASMS). Residues Asp375, Asp377, Ser379, Ser381, Glu386, Asp412, Asn414, Asp416, Glu423, Asp454, Asp456, Asp458, Tyr460, Glu465, Asp486, Asp488, Asp490, Arg492, and Glu497 each coordinate Ca(2+).

This sequence belongs to the protein kinase superfamily. Ser/Thr protein kinase family. CDPK subfamily.

It is found in the membrane. The enzyme catalyses L-seryl-[protein] + ATP = O-phospho-L-seryl-[protein] + ADP + H(+). It catalyses the reaction L-threonyl-[protein] + ATP = O-phospho-L-threonyl-[protein] + ADP + H(+). With respect to regulation, activated by calcium. Autophosphorylation may play an important role in the regulation of the kinase activity. Functionally, may play a role in signal transduction pathways that involve calcium as a second messenger. The chain is Calcium-dependent protein kinase 4 from Oryza sativa subsp. japonica (Rice).